The chain runs to 708 residues: GID complex associated protein 12 (708 aa).

Positions 381–396 are enriched in low complexity; sequence SSRRNSSFSTASSEPR. Residues 381–403 are disordered; it reads SSRRNSSFSTASSEPRPLSRRRR.

Interacts with core components of the GID/CTLH ubiquitin ligase complex. GID12 binds both the substrate receptor GID4 and the tip of GID5 in the scaffolding module, sealing GID4 onto the scaffold.

In terms of biological role, regulator of the GID E3 ligase complex. Modulates both assembly of the substrate receptor GID4 into the GID E3 ligase complex and its activity toward its substrates. GID12-binding remodels the N-degron binding pocket in the GID(SR4) complex, and could limit substrate accessibility of a bulky substrate to a ubiquitynation active site, thereby stabilizing gluconeogenic enzyme substrates. Involved in actin patch formation. This is GID complex associated protein 12 from Saccharomyces cerevisiae (strain ATCC 204508 / S288c) (Baker's yeast).